The primary structure comprises 378 residues: Cytochrome b (378 aa).

Transmembrane regions (helical) follow at residues 34 to 54 (FGSL…FLSM), 78 to 100 (WLLR…CHIG), 113 to 133 (TWNV…VGYV), and 179 to 199 (FFSF…VHLL). Heme b contacts are provided by His-84 and His-98. The heme b site is built by His-183 and His-197. A ubiquinone is bound at residue His-202. 4 helical membrane-spanning segments follow: residues 225–245 (YSTK…IVVL), 289–306 (LGGV…FCLP), 313–342 (KFRS…WIGM), and 350–369 (IFIG…LNPL).

This sequence belongs to the cytochrome b family. As to quaternary structure, the main subunits of complex b-c1 are: cytochrome b, cytochrome c1 and the Rieske protein. The cofactor is heme b.

Its subcellular location is the mitochondrion inner membrane. In terms of biological role, component of the ubiquinol-cytochrome c reductase complex (complex III or cytochrome b-c1 complex) that is part of the mitochondrial respiratory chain. The b-c1 complex mediates electron transfer from ubiquinol to cytochrome c. Contributes to the generation of a proton gradient across the mitochondrial membrane that is then used for ATP synthesis. The protein is Cytochrome b (mt:Cyt-b) of Loxocorone allax (Goblet worm).